Reading from the N-terminus, the 339-residue chain is 4-hydroxy-2-oxovalerate aldolase (339 aa).

In terms of domain architecture, Pyruvate carboxyltransferase spans 8-260; sequence IILHDMCLRD…STDVDVFKLM (253 aa). 16–17 is a binding site for substrate; the sequence is RD. Residue D17 coordinates Mn(2+). Residue H20 is the Proton acceptor of the active site. Substrate contacts are provided by S170 and H199. Residues H199 and H201 each contribute to the Mn(2+) site. Residue Y290 coordinates substrate.

It belongs to the 4-hydroxy-2-oxovalerate aldolase family.

It carries out the reaction (S)-4-hydroxy-2-oxopentanoate = acetaldehyde + pyruvate. This chain is 4-hydroxy-2-oxovalerate aldolase, found in Shewanella woodyi (strain ATCC 51908 / MS32).